The following is a 441-amino-acid chain: Probable D-serine dehydratase (441 aa).

K101 carries the post-translational modification N6-(pyridoxal phosphate)lysine.

Belongs to the serine/threonine dehydratase family. DsdA subfamily. The cofactor is pyridoxal 5'-phosphate.

The catalysed reaction is D-serine = pyruvate + NH4(+). The sequence is that of Probable D-serine dehydratase from Geobacillus kaustophilus (strain HTA426).